The chain runs to 302 residues: Sodium/potassium-transporting ATPase subunit beta-233 (302 aa).

Residues 1–30 (MSGNKDSDGGWKTFIWNSEKKELLGRTGCS) are Cytoplasmic-facing. A helical; Signal-anchor for type II membrane protein transmembrane segment spans residues 31–51 (WFKILLFYVIFYGCLAAVFVG). The Extracellular segment spans residues 52 to 302 (TIQALLLTLS…FDIKITVNDS (251 aa)). Disulfide bonds link Cys125/Cys148 and Cys158/Cys174. Asn193 and Asn263 each carry an N-linked (GlcNAc...) asparagine glycan. Residues Cys213 and Cys274 are joined by a disulfide bond.

This sequence belongs to the X(+)/potassium ATPases subunit beta family. As to quaternary structure, the sodium/potassium-transporting ATPase is composed of a catalytic alpha subunit, an auxiliary non-catalytic beta subunit and an additional regulatory subunit. Glycosylated. As to expression, expressed mainly in epithelial tissues.

The protein localises to the cell membrane. In terms of biological role, this is the non-catalytic component of the active enzyme, which catalyzes the hydrolysis of ATP coupled with the exchange of Na(+) and K(+) ions across the plasma membrane. The beta subunit regulates, through assembly of alpha/beta heterodimers, the number of sodium pumps transported to the plasma membrane. The chain is Sodium/potassium-transporting ATPase subunit beta-233 from Anguilla anguilla (European freshwater eel).